The chain runs to 357 residues: SrfA-induced gene J protein (357 aa).

Residues Met-1 to Glu-29 form a disordered region. Residues Glu-5–Ser-51 adopt a coiled-coil conformation. Positions His-17–Glu-29 are enriched in basic and acidic residues. Asn-114, Asn-157, and Asn-172 each carry an N-linked (GlcNAc...) asparagine glycan. 2 coiled-coil regions span residues Lys-150–Ile-177 and Asp-223–Glu-270. The helical transmembrane segment at Ile-290–Phe-307 threads the bilayer.

The protein resides in the membrane. The chain is SrfA-induced gene J protein (sigJ) from Dictyostelium discoideum (Social amoeba).